The following is an 89-amino-acid chain: UPF0223 protein BAMEG_4214 (89 aa).

The protein belongs to the UPF0223 family.

The chain is UPF0223 protein BAMEG_4214 from Bacillus anthracis (strain CDC 684 / NRRL 3495).